Here is a 292-residue protein sequence, read N- to C-terminus: Inhibitory synaptic factor 1 (292 aa).

Residues 1-25 (MNIRGAPDLGQPSDDPNSGGERERI) are disordered. Residues 30–63 (KMVIGQLEGILRELKEVAKELREVVSQIDKLTSD) are a coiled coil. The disordered stretch occupies residues 120–292 (TPSDSVDGPE…ATKQKAKGKN (173 aa)). Over residues 180 to 192 (GTRERVRFSDKVL) the composition is skewed to basic and acidic residues. Positions 198 to 216 (CDDEEGDGEEGEEEEEGDL) are enriched in acidic residues. Positions 263 to 285 (RNSSTQTVSDKSTQTVLPYTATK) are enriched in polar residues.

This sequence belongs to the INSYN1 family. Interacts with GPHN.

The protein localises to the postsynaptic density. In terms of biological role, component of the protein machinery at the inhibitory synapses, probably acting as a scaffold. Inhibitory synapses dampen neuronal activity through postsynaptic hyperpolarization. This synaptic inhibition is fundamental for the functioning of the central nervous system, shaping and orchestrating the flow of information through neuronal networks to generate a precise neural code. The protein is Inhibitory synaptic factor 1 (Insyn1) of Mus musculus (Mouse).